The sequence spans 904 residues: Phosphoenolpyruvate carboxylase (904 aa).

Positions 52–71 are disordered; it reads ISRRESDAPPSTLSEQLTGR. Over residues 60–70 the composition is skewed to polar residues; sequence PPSTLSEQLTG. Active-site residues include histidine 151 and lysine 570.

The protein belongs to the PEPCase type 1 family. The cofactor is Mg(2+).

The catalysed reaction is oxaloacetate + phosphate = phosphoenolpyruvate + hydrogencarbonate. Forms oxaloacetate, a four-carbon dicarboxylic acid source for the tricarboxylic acid cycle. The sequence is that of Phosphoenolpyruvate carboxylase from Xanthomonas euvesicatoria pv. vesicatoria (strain 85-10) (Xanthomonas campestris pv. vesicatoria).